The primary structure comprises 841 residues: DNA ligase (841 aa).

NAD(+) is bound by residues 54 to 58, 103 to 104, and Glu-143; these read DAEYD and SL. The N6-AMP-lysine intermediate role is filled by Lys-145. Residues Arg-166, Glu-203, Lys-321, and Lys-345 each contribute to the NAD(+) site. Residues Cys-471, Cys-474, Cys-489, and Cys-495 each coordinate Zn(2+). The segment at 554–575 is disordered; that stretch reads KTVAESDQMPSEGSSVGASGKH. A compositionally biased stretch (polar residues) spans 561–570; the sequence is QMPSEGSSVG. Residues 764–841 form the BRCT domain; sequence GINKAVAGKT…SEAELLTLLG (78 aa).

It belongs to the NAD-dependent DNA ligase family. LigA subfamily. Requires Mg(2+) as cofactor. Mn(2+) serves as cofactor.

The enzyme catalyses NAD(+) + (deoxyribonucleotide)n-3'-hydroxyl + 5'-phospho-(deoxyribonucleotide)m = (deoxyribonucleotide)n+m + AMP + beta-nicotinamide D-nucleotide.. In terms of biological role, DNA ligase that catalyzes the formation of phosphodiester linkages between 5'-phosphoryl and 3'-hydroxyl groups in double-stranded DNA using NAD as a coenzyme and as the energy source for the reaction. It is essential for DNA replication and repair of damaged DNA. The chain is DNA ligase from Neisseria meningitidis serogroup C (strain 053442).